The following is a 1199-amino-acid chain: Chromosome partition protein Smc (1199 aa).

Residue 32-39 (PNGSGKSN) participates in ATP binding. Positions 192–528 (GVAEFDEKSE…NARIKTLKDM (337 aa)) form a coiled coil. The SMC hinge domain maps to 546 to 658 (PGVVDIAGNL…VDNLENAKKL (113 aa)). The stretch at 691–1051 (IKVDIDMKKL…YLQLISEVQK (361 aa)) forms a coiled coil.

The protein belongs to the SMC family. As to quaternary structure, homodimer.

It localises to the cytoplasm. Its function is as follows. Required for chromosome condensation and partitioning. This chain is Chromosome partition protein Smc, found in Methanococcus voltae.